A 124-amino-acid chain; its full sequence is Small ribosomal subunit protein bS6 (124 aa).

The tract at residues 96–124 is disordered; that stretch reads ETAPSPMMKEVQREEARKAAQTTTEGQAA. Residues 115–124 show a composition bias toward polar residues; sequence AQTTTEGQAA.

This sequence belongs to the bacterial ribosomal protein bS6 family.

Functionally, binds together with bS18 to 16S ribosomal RNA. The polypeptide is Small ribosomal subunit protein bS6 (Cupriavidus pinatubonensis (strain JMP 134 / LMG 1197) (Cupriavidus necator (strain JMP 134))).